We begin with the raw amino-acid sequence, 359 residues long: Protein LpfD (359 aa).

A signal peptide spans 1–24; sequence MLKKLIMFTGLLGGSVLFSGQALA.

This sequence belongs to the fimbrial protein family.

It localises to the fimbrium. The protein is Protein LpfD (lpfD) of Salmonella typhimurium (strain LT2 / SGSC1412 / ATCC 700720).